The following is a 314-amino-acid chain: Replication initiation protein (314 aa).

This sequence belongs to the plasmid replication initiation factor family.

In terms of biological role, this protein is probably a specific topoisomerase involved in initiating replication. This protein is specifically required and may be rate-limiting for replication of the plasmid in vivo. This chain is Replication initiation protein (repC), found in Staphylococcus aureus.